A 65-amino-acid polypeptide reads, in one-letter code: Weak toxin CM-13b (65 aa).

Intrachain disulfides connect cysteine 3-cysteine 24, cysteine 6-cysteine 11, cysteine 17-cysteine 42, cysteine 46-cysteine 57, and cysteine 58-cysteine 63.

The protein belongs to the three-finger toxin family. Ancestral subfamily. Orphan group II sub-subfamily. As to expression, expressed by the venom gland.

It is found in the secreted. Its function is as follows. Binds with low affinity to muscular (alpha-1-beta-1-delta-epsilon/CHRNA1-CHRNB1-CHRND-CHRNE) and very low affinity to neuronal (alpha-7/CHRNA7) nicotinic acetylcholine receptor (nAChR). This Naja annulifera (Banded Egyptian cobra) protein is Weak toxin CM-13b.